Reading from the N-terminus, the 315-residue chain is tRNA dimethylallyltransferase (315 aa).

Position 13-20 (13-20 (GPTASGKT)) interacts with ATP. Substrate is bound at residue 15–20 (TASGKT). 4 interaction with substrate tRNA regions span residues 38-41 (DSAL), 162-166 (QRLSR), 243-248 (RCVGYR), and 276-283 (KRQITWLR).

It belongs to the IPP transferase family. Monomer. It depends on Mg(2+) as a cofactor.

It catalyses the reaction adenosine(37) in tRNA + dimethylallyl diphosphate = N(6)-dimethylallyladenosine(37) in tRNA + diphosphate. Functionally, catalyzes the transfer of a dimethylallyl group onto the adenine at position 37 in tRNAs that read codons beginning with uridine, leading to the formation of N6-(dimethylallyl)adenosine (i(6)A). The polypeptide is tRNA dimethylallyltransferase (Vibrio vulnificus (strain CMCP6)).